The primary structure comprises 437 residues: Serine hydroxymethyltransferase (437 aa).

Residues leucine 130 and 134–136 contribute to the (6S)-5,6,7,8-tetrahydrofolate site; that span reads GHL. Lysine 239 is modified (N6-(pyridoxal phosphate)lysine).

It belongs to the SHMT family. In terms of assembly, homodimer. Requires pyridoxal 5'-phosphate as cofactor.

The protein resides in the cytoplasm. The catalysed reaction is (6R)-5,10-methylene-5,6,7,8-tetrahydrofolate + glycine + H2O = (6S)-5,6,7,8-tetrahydrofolate + L-serine. It functions in the pathway one-carbon metabolism; tetrahydrofolate interconversion. It participates in amino-acid biosynthesis; glycine biosynthesis; glycine from L-serine: step 1/1. In terms of biological role, catalyzes the reversible interconversion of serine and glycine with tetrahydrofolate (THF) serving as the one-carbon carrier. This reaction serves as the major source of one-carbon groups required for the biosynthesis of purines, thymidylate, methionine, and other important biomolecules. Also exhibits THF-independent aldolase activity toward beta-hydroxyamino acids, producing glycine and aldehydes, via a retro-aldol mechanism. The polypeptide is Serine hydroxymethyltransferase (Bartonella tribocorum (strain CIP 105476 / IBS 506)).